A 1353-amino-acid chain; its full sequence is Xanthine dehydrogenase 2 (1353 aa).

One can recognise a 2Fe-2S ferredoxin-type domain in the interval 7-93; it reads MEAIMYVNGV…GMHVISIEGV (87 aa). [2Fe-2S] cluster contacts are provided by C45, C50, C53, C75, C115, C118, C151, and C153. Residues 249-434 enclose the FAD-binding PCMH-type domain; it reads GGNEGITWYR…LSVFLPWTRP (186 aa). FAD-binding positions include 277–284, F357, 367–371, D380, L424, and K442; these read LLVGNTEV and CIGGN. Mo-molybdopterin-binding residues include Q788 and F819. Residues E823 and R901 each coordinate substrate. R933 lines the Mo-molybdopterin pocket. Substrate-binding residues include F935 and T1031. Position 1100 (A1100) interacts with Mo-molybdopterin. E1289 (proton acceptor) is an active-site residue.

This sequence belongs to the xanthine dehydrogenase family. As to quaternary structure, homodimer. It depends on [2Fe-2S] cluster as a cofactor. Requires FAD as cofactor. The cofactor is Mo-molybdopterin. As to expression, expressed in roots, leaves, stems, flowers and siliques.

The catalysed reaction is xanthine + NAD(+) + H2O = urate + NADH + H(+). The enzyme catalyses hypoxanthine + NAD(+) + H2O = xanthine + NADH + H(+). In terms of biological role, key enzyme involved in purine catabolism. Catalyzes the oxidation of hypoxanthine to xanthine and the oxidation of xanthine to urate. Regulates the level of ureides and plays a role during plant growth and development and senescence. In Arabidopsis thaliana (Mouse-ear cress), this protein is Xanthine dehydrogenase 2 (XDH2).